Reading from the N-terminus, the 56-residue chain is Male-specific sperm protein Mst87F (56 aa).

Belongs to the MST(3)CGP family. In terms of tissue distribution, testis.

This Drosophila melanogaster (Fruit fly) protein is Male-specific sperm protein Mst87F (Mst87F).